A 402-amino-acid polypeptide reads, in one-letter code: Pyridinium-3,5-bisthiocarboxylic acid mononucleotide nickel insertion protein (402 aa).

This sequence belongs to the LarC family.

The enzyme catalyses Ni(II)-pyridinium-3,5-bisthiocarboxylate mononucleotide = pyridinium-3,5-bisthiocarboxylate mononucleotide + Ni(2+). In terms of biological role, involved in the biosynthesis of a nickel-pincer cofactor ((SCS)Ni(II) pincer complex). Binds Ni(2+), and functions in nickel delivery to pyridinium-3,5-bisthiocarboxylic acid mononucleotide (P2TMN), to form the mature cofactor. Is thus probably required for the activation of nickel-pincer cofactor-dependent enzymes. The polypeptide is Pyridinium-3,5-bisthiocarboxylic acid mononucleotide nickel insertion protein (Thermotoga sp. (strain RQ2)).